Reading from the N-terminus, the 305-residue chain is Acetyl-coenzyme A carboxylase carboxyl transferase subunit beta (305 aa).

In terms of domain architecture, CoA carboxyltransferase N-terminal spans 27–296 (LWVKCSSCRE…SPAKAELAGR (270 aa)). 4 residues coordinate Zn(2+): cysteine 31, cysteine 34, cysteine 50, and cysteine 53. The segment at 31–53 (CSSCRELIYKKQLNDNLKVCPKC) adopts a C4-type zinc-finger fold.

Belongs to the AccD/PCCB family. As to quaternary structure, acetyl-CoA carboxylase is a heterohexamer composed of biotin carboxyl carrier protein (AccB), biotin carboxylase (AccC) and two subunits each of ACCase subunit alpha (AccA) and ACCase subunit beta (AccD). It depends on Zn(2+) as a cofactor.

Its subcellular location is the cytoplasm. The catalysed reaction is N(6)-carboxybiotinyl-L-lysyl-[protein] + acetyl-CoA = N(6)-biotinyl-L-lysyl-[protein] + malonyl-CoA. The protein operates within lipid metabolism; malonyl-CoA biosynthesis; malonyl-CoA from acetyl-CoA: step 1/1. Its function is as follows. Component of the acetyl coenzyme A carboxylase (ACC) complex. Biotin carboxylase (BC) catalyzes the carboxylation of biotin on its carrier protein (BCCP) and then the CO(2) group is transferred by the transcarboxylase to acetyl-CoA to form malonyl-CoA. This chain is Acetyl-coenzyme A carboxylase carboxyl transferase subunit beta, found in Chloroflexus aurantiacus (strain ATCC 29366 / DSM 635 / J-10-fl).